The following is a 943-amino-acid chain: Isoleucine--tRNA ligase (943 aa).

The short motif at 59–69 is the 'HIGH' region element; the sequence is PYANGQIHLGH. Position 577 (Glu-577) interacts with L-isoleucyl-5'-AMP. The 'KMSKS' region signature appears at 618-622; the sequence is KMSKS. Lys-621 contacts ATP. Positions 906, 909, 926, and 929 each coordinate Zn(2+).

The protein belongs to the class-I aminoacyl-tRNA synthetase family. IleS type 1 subfamily. Monomer. Zn(2+) serves as cofactor.

Its subcellular location is the cytoplasm. The catalysed reaction is tRNA(Ile) + L-isoleucine + ATP = L-isoleucyl-tRNA(Ile) + AMP + diphosphate. In terms of biological role, catalyzes the attachment of isoleucine to tRNA(Ile). As IleRS can inadvertently accommodate and process structurally similar amino acids such as valine, to avoid such errors it has two additional distinct tRNA(Ile)-dependent editing activities. One activity is designated as 'pretransfer' editing and involves the hydrolysis of activated Val-AMP. The other activity is designated 'posttransfer' editing and involves deacylation of mischarged Val-tRNA(Ile). This Xanthomonas oryzae pv. oryzae (strain MAFF 311018) protein is Isoleucine--tRNA ligase.